The sequence spans 1741 residues: S-layer protein (1741 aa).

Over residues S894–G904 the composition is skewed to polar residues. The segment at S894 to D913 is disordered.

Post-translationally, glycosylated.

Its subcellular location is the secreted. The protein localises to the cell wall. It localises to the S-layer. S-layer protein. The S-layer is a paracrystalline mono-layered assembly of proteins which coats the surface of bacteria. Under laboratory conditions, has a supportive but not a critical role in the function of the cyanobacterium. Shows no apparent hemolytic activity against sheep erythrocytes, however, a slight hemolytic activity is detected during the conformational change caused by the rebinding of Ca(2+). In Synechocystis sp. (strain ATCC 27184 / PCC 6803 / Kazusa), this protein is S-layer protein.